The sequence spans 237 residues: Ribitol-5-phosphate cytidylyltransferase (237 aa).

Residues 7–10 (LAGG) and 80–86 (GEDRNET) each bind CTP.

Belongs to the IspD/TarI cytidylyltransferase family. TarI subfamily.

It carries out the reaction D-ribitol 5-phosphate + CTP + H(+) = CDP-L-ribitol + diphosphate. The protein operates within cell wall biogenesis; poly(ribitol phosphate) teichoic acid biosynthesis. Functionally, catalyzes the transfer of the cytidylyl group of CTP to D-ribitol 5-phosphate. This chain is Ribitol-5-phosphate cytidylyltransferase, found in Listeria monocytogenes serotype 4b (strain F2365).